Here is a 78-residue protein sequence, read N- to C-terminus: Large ribosomal subunit protein bL31 (78 aa).

The Zn(2+) site is built by C16, C18, C38, and C41.

This sequence belongs to the bacterial ribosomal protein bL31 family. Type A subfamily. In terms of assembly, part of the 50S ribosomal subunit. Requires Zn(2+) as cofactor.

In terms of biological role, binds the 23S rRNA. This is Large ribosomal subunit protein bL31 from Frankia alni (strain DSM 45986 / CECT 9034 / ACN14a).